Consider the following 221-residue polypeptide: Deep sea actinoporin Cjtox II (221 aa).

The first 19 residues, 1 to 19 (MNRLIIVCLVAAMIYSTIA), serve as a signal peptide directing secretion. The propeptide occupies 20–42 (LPMKEDISNDERPISVNEEPVKK). Residues S96, V129, S147, P149, Y175, Y179, and Y180 each coordinate phosphocholine. Positions 147–162 (SVPYDYNWYENWWNIK) are trp-rich region, which is important for the binding to lipid membrane. The Cell attachment site, crucial for protein stability motif lies at 186–188 (KGD).

Belongs to the actinoporin family. Sea anemone subfamily. Octamer or nonamer in membranes. Monomer in the soluble state. Expressed in actinopharynx and in gastric filaments. Is not expressed in tentacles.

Its subcellular location is the secreted. It localises to the nematocyst. The protein localises to the target cell membrane. In terms of biological role, may be involved in digestion of prey. Pore-forming protein that forms cations-selective hydrophilic pores of around 1 nm and causes cytolysis. Pore formation is a multi-step process that involves specific recognition of membrane sphingomyelin (but neither cholesterol nor phosphatidylcholine) using aromatic rich region and adjacent phosphocholine (POC) binding site, firm binding to the membrane (mainly driven by hydrophobic interactions) accompanied by the transfer of the N-terminal region to the lipid-water interface and finally pore formation after oligomerization of monomers. Shows hemolytic activity on equine erythrocytes. Hemolysis is highly inhibited in presence of sphingomyelin, suggesting that this protein targets sphingomyelin. In Cribrinopsis japonica (Deep-sea anemone), this protein is Deep sea actinoporin Cjtox II.